A 247-amino-acid polypeptide reads, in one-letter code: tRNA pseudouridine synthase A (247 aa).

Asp52 acts as the Nucleophile in catalysis. Tyr113 contacts substrate.

It belongs to the tRNA pseudouridine synthase TruA family. As to quaternary structure, homodimer.

It catalyses the reaction uridine(38/39/40) in tRNA = pseudouridine(38/39/40) in tRNA. Its function is as follows. Formation of pseudouridine at positions 38, 39 and 40 in the anticodon stem and loop of transfer RNAs. This Bartonella henselae (strain ATCC 49882 / DSM 28221 / CCUG 30454 / Houston 1) (Rochalimaea henselae) protein is tRNA pseudouridine synthase A.